The following is an 832-amino-acid chain: Protein PPP4R3C (832 aa).

The disordered stretch occupies residues 708-832; it reads RTQEGEAVMP…SPKKKPHLSS (125 aa). 2 stretches are compositionally biased toward basic and acidic residues: residues 725–735 and 749–765; these read FTETKRTHQEG and METK…DSPK. A compositionally biased stretch (low complexity) spans 769–779; the sequence is SGDFKFSSSYS. The segment covering 801–820 has biased composition (acidic residues); that stretch reads PDDEEEKEEDEEEKEEDKED.

The protein belongs to the SMEK family.

In Homo sapiens (Human), this protein is Protein PPP4R3C.